A 465-amino-acid chain; its full sequence is Poly(A) polymerase I (465 aa).

Residues aspartate 80, aspartate 82, and aspartate 162 contribute to the active site. Residues 430–465 (APPEQKGMLNELDDDPAPRRRRSRPRKRAPRREGTV) form a disordered region. Positions 448 to 459 (RRRRSRPRKRAP) are enriched in basic residues.

It belongs to the tRNA nucleotidyltransferase/poly(A) polymerase family.

It carries out the reaction RNA(n) + ATP = RNA(n)-3'-adenine ribonucleotide + diphosphate. Its function is as follows. Adds poly(A) tail to the 3' end of many RNAs, which usually targets these RNAs for decay. Plays a significant role in the global control of gene expression, through influencing the rate of transcript degradation, and in the general RNA quality control. This Salmonella typhimurium (strain LT2 / SGSC1412 / ATCC 700720) protein is Poly(A) polymerase I.